The chain runs to 219 residues: Vacuolar iron transporter homolog 2.1 (219 aa).

Residues 1-15 (MTSNVQLSETNSPRN) are compositionally biased toward polar residues. The tract at residues 1-26 (MTSNVQLSETNSPRNQKTRPRAEKEE) is disordered. An N-acetylthreonine modification is found at threonine 2. The Cytoplasmic portion of the chain corresponds to 2-37 (TSNVQLSETNSPRNQKTRPRAEKEEVDYMQRAQWLR). A helical transmembrane segment spans residues 38 to 58 (AALLGANDGLVTVASLMMGVG). Over 59–67 (SIKEDVKAM) the chain is Vacuolar. The chain crosses the membrane as a helical span at residues 68–88 (LLVGFAGLVAGACSMAIGEFV). At 89–133 (SVCTQRDIETAQMKRAIEHKTSLSAIDEQEEEEKKERLPNPGQAA) the chain is on the cytoplasmic side. Residues 134–154 (IASALAFSVGAAMPLLGAVFI) form a helical membrane-spanning segment. Over 155–161 (ENHKVRM) the chain is Vacuolar. The helical transmembrane segment at 162–182 (VVVAVVATIALVVFGVTGAVL) threads the bilayer. Residues 183-193 (GKTSVVKSSVR) lie on the Cytoplasmic side of the membrane. Residues 194-214 (VVIGGWMAMALTFGLTKFIGS) traverse the membrane as a helical segment. Topologically, residues 215 to 219 (AAMQI) are vacuolar.

Belongs to the CCC1 family. Highly expressed in roots. inflorescences and at lower levels in leaves.

The protein resides in the vacuole membrane. It carries out the reaction Fe(2+)(in) = Fe(2+)(out). Its function is as follows. Vacuolar iron transporter involved in the transfer of iron ions from the cytosol to the vacuole for intracellular iron storage. Involved in regulation of cellular iron homeostasis. Vacuolar iron storage is required for seed embryo and seedling development. The chain is Vacuolar iron transporter homolog 2.1 from Arabidopsis thaliana (Mouse-ear cress).